A 551-amino-acid polypeptide reads, in one-letter code: Glucose-6-phosphate isomerase 2 (551 aa).

Catalysis depends on glutamate 353, which acts as the Proton donor. Catalysis depends on residues histidine 384 and lysine 512.

This sequence belongs to the GPI family.

The protein resides in the cytoplasm. It catalyses the reaction alpha-D-glucose 6-phosphate = beta-D-fructose 6-phosphate. It functions in the pathway carbohydrate biosynthesis; gluconeogenesis. It participates in carbohydrate degradation; glycolysis; D-glyceraldehyde 3-phosphate and glycerone phosphate from D-glucose: step 2/4. Its function is as follows. Catalyzes the reversible isomerization of glucose-6-phosphate to fructose-6-phosphate. This chain is Glucose-6-phosphate isomerase 2, found in Colwellia psychrerythraea (strain 34H / ATCC BAA-681) (Vibrio psychroerythus).